The chain runs to 430 residues: Lipoyl synthase, mitochondrial (430 aa).

A mitochondrion-targeting transit peptide spans 1 to 37 (MATSAGKLRTLYSAHSSLSSLPPSARPTLQLATLRSY). Residues 39–55 (TTTPHDSPIGNTSNTPP) are compositionally biased toward polar residues. Residues 39–58 (TTTPHDSPIGNTSNTPPTVK) form a disordered region. Positions 141, 146, 152, 172, 176, 179, and 387 each coordinate [4Fe-4S] cluster. Residues 155-376 (GSSKSAATAT…KERALEMGFL (222 aa)) enclose the Radical SAM core domain.

It belongs to the radical SAM superfamily. Lipoyl synthase family. Requires [4Fe-4S] cluster as cofactor.

It localises to the mitochondrion. It catalyses the reaction [[Fe-S] cluster scaffold protein carrying a second [4Fe-4S](2+) cluster] + N(6)-octanoyl-L-lysyl-[protein] + 2 oxidized [2Fe-2S]-[ferredoxin] + 2 S-adenosyl-L-methionine + 4 H(+) = [[Fe-S] cluster scaffold protein] + N(6)-[(R)-dihydrolipoyl]-L-lysyl-[protein] + 4 Fe(3+) + 2 hydrogen sulfide + 2 5'-deoxyadenosine + 2 L-methionine + 2 reduced [2Fe-2S]-[ferredoxin]. The protein operates within protein modification; protein lipoylation via endogenous pathway; protein N(6)-(lipoyl)lysine from octanoyl-[acyl-carrier-protein]: step 2/2. Catalyzes the radical-mediated insertion of two sulfur atoms into the C-6 and C-8 positions of the octanoyl moiety bound to the lipoyl domains of lipoate-dependent enzymes, thereby converting the octanoylated domains into lipoylated derivatives. The polypeptide is Lipoyl synthase, mitochondrial (Ajellomyces capsulatus (strain G186AR / H82 / ATCC MYA-2454 / RMSCC 2432) (Darling's disease fungus)).